Reading from the N-terminus, the 434-residue chain is G2/mitotic-specific cyclin-2 (434 aa).

It belongs to the cyclin family. Cyclin AB subfamily. In terms of assembly, interacts with the CDC2 protein kinase to form a serine/threonine kinase holoenzyme complex also known as maturation promoting factor (MPF). The cyclin subunit imparts substrate specificity to the complex.

Its function is as follows. Essential for the control of the cell cycle at the G2/M (mitosis) transition. In Medicago sativa subsp. varia (Alfalfa), this protein is G2/mitotic-specific cyclin-2.